Here is a 181-residue protein sequence, read N- to C-terminus: Peptide deformylase (181 aa).

Residues cysteine 99 and histidine 141 each coordinate Fe cation. Glutamate 142 is a catalytic residue. A Fe cation-binding site is contributed by histidine 145.

The protein belongs to the polypeptide deformylase family. Fe(2+) is required as a cofactor.

The enzyme catalyses N-terminal N-formyl-L-methionyl-[peptide] + H2O = N-terminal L-methionyl-[peptide] + formate. Functionally, removes the formyl group from the N-terminal Met of newly synthesized proteins. Requires at least a dipeptide for an efficient rate of reaction. N-terminal L-methionine is a prerequisite for activity but the enzyme has broad specificity at other positions. The chain is Peptide deformylase from Chlamydia muridarum (strain MoPn / Nigg).